The sequence spans 946 residues: Zinc finger CCCH-type antiviral protein 1 (946 aa).

Residues 1–254 are N-terminal domain; the sequence is MTDPEVFCFI…DRSKSRDRFH (254 aa). The short motif at 69–76 is the Nuclear localization signal element; that stretch reads RARVCRRK. 4 consecutive C3H1-type zinc fingers follow at residues 73 to 86, 87 to 113, 150 to 172, and 173 to 194; these read CRRK…DSLH, LCKL…HDVL, CKSY…ERLH, and ICEH…HNLM. Disordered regions lie at residues 221-283 and 302-354; these read NKHT…KDPL and RAQL…AAGF. The binding to EXOSC5 stretch occupies residues 224–254; it reads TRRNPPSMRAPHPHRRGGAHRDRSKSRDRFH. The span at 242–257 shows a compositional bias: basic and acidic residues; the sequence is AHRDRSKSRDRFHHNS. S257 bears the Phosphoserine mark. Residue S262 is modified to Phosphoserine; by GSK3-beta. Residues S265, S269, and S273 each carry the phosphoserine modification. At T277 the chain carries Phosphothreonine. The Nuclear export signal motif lies at 283 to 290; it reads LEDVSADV. Residues S324 and S350 each carry the phosphoserine modification. The Nuclear localization signal signature appears at 412–413; the sequence is KR. Residue S425 is modified to Phosphoserine. The tract at residues 461–491 is disordered; it reads NPAWPGTSTHNGPNGFSQIMDETPNVSKSSP. The segment covering 466–477 has biased composition (polar residues); that stretch reads GTSTHNGPNGFS. Phosphotyrosine is present on Y508. The segment at 523–570 is disordered; the sequence is GETTTPVQGSNRLPPSPLSSSTSHRVAASGSPGKSSTHASVSPASEPS. Over residues 524 to 533 the composition is skewed to polar residues; the sequence is ETTTPVQGSN. Residue S553 is modified to Phosphoserine. Positions 554 to 567 are enriched in polar residues; sequence PGKSSTHASVSPAS. Residues S583 and S680 each carry the phosphoserine modification. Residues 684–771 form the WWE domain; the sequence is FVEKTLNSVF…ASKTQRHVVR (88 aa). The PARP catalytic domain occupies 805 to 946; that stretch reads SPQRNASTVS…SLDSSGLQRK (142 aa).

The protein belongs to the ARTD/PARP family. As to quaternary structure, homodimer or homooligomer. Homooligomerization is essential for its antiviral activity. Interacts with EXOSC5. Interacts (via N-terminal domain) with DDX17 in an RNA-independent manner. Interacts with EXOSC3, EXOSC7, DCP2 and DCP1A. Interacts with PARN in an RNA-independent manner. Interacts with XRN1 in an RNA-dependent manner. Interacts (via N-terminal domain) with DHX30 (via N-terminus) in an RNA-independent manner. Isoform 2 interacts (via zinc-fingers) with RIGI in an RNA-dependent manner. Post-translationally, phosphorylation at Ser-273 is essential for sequential phosphorylation of Ser-269, Ser-265, Ser-262 and Ser-257 by GSK3-beta. Phosphorylation by GSK3-beta enhances its antiviral activity.

The protein resides in the cytoplasm. Its subcellular location is the nucleus. Antiviral protein which inhibits the replication of viruses by recruiting the cellular RNA degradation machineries to degrade the viral mRNAs. Binds to a ZAP-responsive element (ZRE) present in the target viral mRNA, recruits cellular poly(A)-specific ribonuclease PARN to remove the poly(A) tail, and the 3'-5' exoribonuclease complex exosome to degrade the RNA body from the 3'-end. It also recruits the decapping complex DCP1-DCP2 through RNA helicase p72 (DDX17) to remove the cap structure of the viral mRNA to initiate its degradation from the 5'-end. Its target viruses belong to families which include retroviridae: human immunodeficiency virus type 1 (HIV-1) and moloney and murine leukemia virus (MoMLV), filoviridae: ebola virus (EBOV) and marburg virus (MARV), togaviridae: sindbis virus (SINV) and Ross river virus (RRV). Specifically targets the multiply spliced but not unspliced or singly spliced HIV-1 mRNAs for degradation. Isoform 1 is a more potent viral inhibitor than isoform 2. Isoform 2 acts as a positive regulator of RIG-I signaling resulting in activation of the downstream effector IRF3 leading to the expression of type I IFNs and IFN stimulated genes (ISGs). In Mus musculus (Mouse), this protein is Zinc finger CCCH-type antiviral protein 1 (Zc3hav1).